The sequence spans 83 residues: uncharacterized protein (83 aa).

The tract at residues 15-36 is disordered; that stretch reads RLKNGRGNKTMSESDYNTSDSG. Polar residues predominate over residues 21-35; it reads GNKTMSESDYNTSDS.

This is an uncharacterized protein from Aedes vexans (Inland floodwater mosquito).